A 225-amino-acid polypeptide reads, in one-letter code: NAD(P)H-quinone oxidoreductase subunit K, chloroplastic (225 aa).

[4Fe-4S] cluster-binding residues include cysteine 43, cysteine 44, cysteine 108, and cysteine 139.

It belongs to the complex I 20 kDa subunit family. In terms of assembly, NDH is composed of at least 16 different subunits, 5 of which are encoded in the nucleus. Requires [4Fe-4S] cluster as cofactor.

The protein localises to the plastid. It is found in the chloroplast thylakoid membrane. It carries out the reaction a plastoquinone + NADH + (n+1) H(+)(in) = a plastoquinol + NAD(+) + n H(+)(out). It catalyses the reaction a plastoquinone + NADPH + (n+1) H(+)(in) = a plastoquinol + NADP(+) + n H(+)(out). Functionally, NDH shuttles electrons from NAD(P)H:plastoquinone, via FMN and iron-sulfur (Fe-S) centers, to quinones in the photosynthetic chain and possibly in a chloroplast respiratory chain. The immediate electron acceptor for the enzyme in this species is believed to be plastoquinone. Couples the redox reaction to proton translocation, and thus conserves the redox energy in a proton gradient. This chain is NAD(P)H-quinone oxidoreductase subunit K, chloroplastic, found in Nymphaea alba (White water-lily).